The chain runs to 188 residues: Protein TIFY 9 (188 aa).

Residues 20–41 form a disordered region; it reads DADDRHAKSGGSSASSSSSIRG. The span at 28 to 38 shows a compositional bias: low complexity; the sequence is SGGSSASSSSS. A Tify domain is found at 80–114; sequence AAAAAAPMTLFYNGSVAVFDVSHDKAEAIMRMATE. Residues 135-160 carry the Jas motif; it reads PLTRTKSLQRFLSKRKERLTSLGPYQ. Residues 156–188 are disordered; sequence LGPYQVGGPAAVGATTSTTTKSFLAKEEEHTAS. Basic and acidic residues predominate over residues 179–188; it reads LAKEEEHTAS.

It belongs to the TIFY/JAZ family. In terms of processing, ubiquitinated. Targeted for degradation by the SCF(COI1) E3 ubiquitin ligase-proteasome pathway during jasmonate signaling.

Functionally, repressor of jasmonate responses. This chain is Protein TIFY 9, found in Oryza sativa subsp. indica (Rice).